The chain runs to 309 residues: uncharacterized protein (309 aa).

The segment at Pro272–Leu291 is disordered.

This is an uncharacterized protein from Bacillus subtilis (strain 168).